The chain runs to 886 residues: Valine--tRNA ligase (886 aa).

Positions 53–63 (PNVTGSLHMGH) match the 'HIGH' region motif. The short motif at 540 to 544 (KMSKS) is the 'KMSKS' region element. Residue Lys-543 coordinates ATP. Residues 819-851 (TIDVAAERRRLEKELAGAQKELASTAAKLANAD) are a coiled coil.

Belongs to the class-I aminoacyl-tRNA synthetase family. ValS type 1 subfamily. Monomer.

It localises to the cytoplasm. It catalyses the reaction tRNA(Val) + L-valine + ATP = L-valyl-tRNA(Val) + AMP + diphosphate. Catalyzes the attachment of valine to tRNA(Val). As ValRS can inadvertently accommodate and process structurally similar amino acids such as threonine, to avoid such errors, it has a 'posttransfer' editing activity that hydrolyzes mischarged Thr-tRNA(Val) in a tRNA-dependent manner. The protein is Valine--tRNA ligase of Mycobacterium tuberculosis (strain CDC 1551 / Oshkosh).